Consider the following 135-residue polypeptide: Holo-[acyl-carrier-protein] synthase (135 aa).

Residues Asp-7 and Glu-57 each contribute to the Mg(2+) site.

The protein belongs to the P-Pant transferase superfamily. AcpS family. It depends on Mg(2+) as a cofactor.

The protein resides in the cytoplasm. It carries out the reaction apo-[ACP] + CoA = holo-[ACP] + adenosine 3',5'-bisphosphate + H(+). Functionally, transfers the 4'-phosphopantetheine moiety from coenzyme A to a Ser of acyl-carrier-protein. This Corynebacterium glutamicum (strain R) protein is Holo-[acyl-carrier-protein] synthase.